The sequence spans 163 residues: UPF0416 protein RBE_1121 (163 aa).

This sequence belongs to the UPF0416 family.

This chain is UPF0416 protein RBE_1121, found in Rickettsia bellii (strain RML369-C).